A 130-amino-acid chain; its full sequence is Small ribosomal subunit protein uS9 (130 aa).

Belongs to the universal ribosomal protein uS9 family.

The chain is Small ribosomal subunit protein uS9 from Shigella dysenteriae serotype 1 (strain Sd197).